Consider the following 154-residue polypeptide: Large ribosomal subunit protein uL13 (154 aa).

The protein belongs to the universal ribosomal protein uL13 family. Part of the 50S ribosomal subunit.

Functionally, this protein is one of the early assembly proteins of the 50S ribosomal subunit, although it is not seen to bind rRNA by itself. It is important during the early stages of 50S assembly. The sequence is that of Large ribosomal subunit protein uL13 from Bradyrhizobium diazoefficiens (strain JCM 10833 / BCRC 13528 / IAM 13628 / NBRC 14792 / USDA 110).